A 486-amino-acid polypeptide reads, in one-letter code: NADH-quinone oxidoreductase subunit N (486 aa).

Helical transmembrane passes span 8–28 (LTALLPLLIIMLTVITVILSI), 36–56 (FVAVFSILGLIFALCSLYFLI), 74–94 (ILYIGMILISSICTCIFSYPW), 104–124 (EFYLLVIISTLGAISLTISHH), 125–145 (MASFFINIELISLPMFGLIAY), 160–180 (IILSGVSSSFLLFGIAWVYSI), 201–221 (ILVVLFGISMILLSLFFKLSI), 239–259 (VLSFFSTAGKISVFSVLLNFL), 269–289 (VIYFILSLIIILSILVGNLMA), 298–318 (FLGYTSISQIGYLLIVLLVSH), 329–349 (AIYLCGYLFSNIACLGIVNLI), 376–396 (SVLTLVLISSAGIPMTLGFIG), 410–432 (WLIGFAFLIGSLLGLYCYLRIIL), and 459–479 (IVICISGIILLALGIYPNPLI).

The protein belongs to the complex I subunit 2 family. NDH-1 is composed of 13 different subunits. Subunits NuoA, H, J, K, L, M, N constitute the membrane sector of the complex.

The protein localises to the cell membrane. It catalyses the reaction a quinone + NADH + 5 H(+)(in) = a quinol + NAD(+) + 4 H(+)(out). In terms of biological role, NDH-1 shuttles electrons from NADH, via FMN and iron-sulfur (Fe-S) centers, to quinones in the respiratory chain. The immediate electron acceptor for the enzyme in this species is believed to be ubiquinone. Couples the redox reaction to proton translocation (for every two electrons transferred, four hydrogen ions are translocated across the cytoplasmic membrane), and thus conserves the redox energy in a proton gradient. This chain is NADH-quinone oxidoreductase subunit N, found in Buchnera aphidicola subsp. Acyrthosiphon pisum (strain APS) (Acyrthosiphon pisum symbiotic bacterium).